Here is a 218-residue protein sequence, read N- to C-terminus: Ribonuclease HII (218 aa).

The RNase H type-2 domain maps to 24–218 (ESIAGVDEVG…KLFAVNGSLT (195 aa)). A divalent metal cation contacts are provided by D30, E31, and D126.

It belongs to the RNase HII family. It depends on Mn(2+) as a cofactor. Mg(2+) is required as a cofactor.

The protein resides in the cytoplasm. The enzyme catalyses Endonucleolytic cleavage to 5'-phosphomonoester.. Functionally, endonuclease that specifically degrades the RNA of RNA-DNA hybrids. The sequence is that of Ribonuclease HII from Prochlorococcus marinus (strain MIT 9313).